The sequence spans 518 residues: Cytochrome P450 monooxygenase psoD (518 aa).

A heme-binding site is contributed by Cys442.

This sequence belongs to the cytochrome P450 family. Heme serves as cofactor.

The protein operates within secondary metabolite biosynthesis. Functionally, cytochrome P450 monooxygenase; part of the gene cluster that mediates the biosynthesis of pseurotin A, a competitive inhibitor of chitin synthase and an inducer of nerve-cell proliferation. The PKS-NRPS hybrid synthetase psoA is responsible for the biosynthesis of azaspirene, one of the first intermediates having the 1-oxa-7-azaspiro[4,4]-non-2-ene-4,6-dione core of pseurotin, via condensation of one acetyl-CoA, 4 malonyl-CoA, and a L-phenylalanine molecule. The dual-functional monooxygenase/methyltransferase psoF seems to be involved in the addition of the C3 methyl group onto the pseurotin scaffold. Azaspirene is then converted to synerazol through 4 steps including oxidation of C17 by the cytochrome P450 monooxygenase psoD, O-methylation of the hydroxy group of C8 by the methyltransferase psoC, and the trans-to-cis isomerization of the C13 olefin by the glutathione S-transferase psoE. The fourth step of synerazol production is performed by the dual-functional monooxygenase/methyltransferase psoF which seems to catalyze the epoxidation of the intermediate deepoxy-synerazol. Synerazol can be attacked by a water molecule nonenzymatically at two different positions to yield two diol products, pseurotin A and pseurotin D. This Aspergillus fumigatus (strain ATCC MYA-4609 / CBS 101355 / FGSC A1100 / Af293) (Neosartorya fumigata) protein is Cytochrome P450 monooxygenase psoD.